We begin with the raw amino-acid sequence, 406 residues long: Bifunctional protein GlmU (406 aa).

The segment at 1–221 is pyrophosphorylase; that stretch reads MFIILAAGHG…EEEATGINSR (221 aa). Residues 5–8, K19, Q68, 73–74, 98–100, G134, E148, N162, and N219 each bind UDP-N-acetyl-alpha-D-glucosamine; these read LAAG, GT, and YGD. D100 is a Mg(2+) binding site. Position 219 (N219) interacts with Mg(2+). Residues 222–242 are linker; the sequence is NDLAKAEFYFQENRRKFFTDS. The interval 243–406 is N-acetyltransferase; sequence GVTLVAPETV…RRKQMVKKIK (164 aa). K308 serves as a coordination point for UDP-N-acetyl-alpha-D-glucosamine. H320 functions as the Proton acceptor in the catalytic mechanism. Residues Y323 and N334 each coordinate UDP-N-acetyl-alpha-D-glucosamine. Acetyl-CoA contacts are provided by residues A337, 343-344, A380, and R397; that span reads NY.

This sequence in the N-terminal section; belongs to the N-acetylglucosamine-1-phosphate uridyltransferase family. It in the C-terminal section; belongs to the transferase hexapeptide repeat family. In terms of assembly, homotrimer. Mg(2+) serves as cofactor.

The protein localises to the cytoplasm. It catalyses the reaction alpha-D-glucosamine 1-phosphate + acetyl-CoA = N-acetyl-alpha-D-glucosamine 1-phosphate + CoA + H(+). The catalysed reaction is N-acetyl-alpha-D-glucosamine 1-phosphate + UTP + H(+) = UDP-N-acetyl-alpha-D-glucosamine + diphosphate. It participates in nucleotide-sugar biosynthesis; UDP-N-acetyl-alpha-D-glucosamine biosynthesis; N-acetyl-alpha-D-glucosamine 1-phosphate from alpha-D-glucosamine 6-phosphate (route II): step 2/2. Its pathway is nucleotide-sugar biosynthesis; UDP-N-acetyl-alpha-D-glucosamine biosynthesis; UDP-N-acetyl-alpha-D-glucosamine from N-acetyl-alpha-D-glucosamine 1-phosphate: step 1/1. The protein operates within bacterial outer membrane biogenesis; LPS lipid A biosynthesis. Its function is as follows. Catalyzes the last two sequential reactions in the de novo biosynthetic pathway for UDP-N-acetylglucosamine (UDP-GlcNAc). The C-terminal domain catalyzes the transfer of acetyl group from acetyl coenzyme A to glucosamine-1-phosphate (GlcN-1-P) to produce N-acetylglucosamine-1-phosphate (GlcNAc-1-P), which is converted into UDP-GlcNAc by the transfer of uridine 5-monophosphate (from uridine 5-triphosphate), a reaction catalyzed by the N-terminal domain. In Wolbachia sp. subsp. Brugia malayi (strain TRS), this protein is Bifunctional protein GlmU.